The chain runs to 189 residues: Elongation factor P (189 aa).

Belongs to the elongation factor P family.

It localises to the cytoplasm. Its pathway is protein biosynthesis; polypeptide chain elongation. Involved in peptide bond synthesis. Stimulates efficient translation and peptide-bond synthesis on native or reconstituted 70S ribosomes in vitro. Probably functions indirectly by altering the affinity of the ribosome for aminoacyl-tRNA, thus increasing their reactivity as acceptors for peptidyl transferase. This is Elongation factor P from Chloroflexus aggregans (strain MD-66 / DSM 9485).